Consider the following 461-residue polypeptide: Cysteine--tRNA ligase (461 aa).

A Zn(2+)-binding site is contributed by cysteine 28. A 'HIGH' region motif is present at residues 30–40; sequence ITVYDLCHIGH. Zn(2+) contacts are provided by cysteine 209, histidine 234, and glutamate 238. The 'KMSKS' region signature appears at 266-270; sequence KMSKS. Lysine 269 lines the ATP pocket.

It belongs to the class-I aminoacyl-tRNA synthetase family. As to quaternary structure, monomer. Zn(2+) serves as cofactor.

Its subcellular location is the cytoplasm. The enzyme catalyses tRNA(Cys) + L-cysteine + ATP = L-cysteinyl-tRNA(Cys) + AMP + diphosphate. The protein is Cysteine--tRNA ligase of Salmonella dublin (strain CT_02021853).